The sequence spans 315 residues: MLDFEKPLFEIKNKIESLKQSQEKNDVDLQDEIDLLEASLERETKKIYTNLKPWDRVQIARLQERPTTLDYIPYIFDSFIELHGDRNFRDDPAMIGGIGYLNGTPVTVIGQQRGKDTKDNIYRNFGMAHPEGYRKALRLMKQAEKFNRPIFTFIDTKGAYPGKAAEERGQSESIARNLVEMASLKVPVIAIVIGEGGSGGALGIGIANRIMMLENSTYSVISPEGAAALLWKDSSLAKMAAETMKITAKDLHHLNVIDSVIDEPLGGAHNNIEQQAIDIKQAFVDQLEQLQQQSADELVEDRFNKFRNIGAFIEK.

The 258-residue stretch at glutamate 32–glutamine 289 folds into the CoA carboxyltransferase C-terminal domain.

It belongs to the AccA family. In terms of assembly, acetyl-CoA carboxylase is a heterohexamer composed of biotin carboxyl carrier protein (AccB), biotin carboxylase (AccC) and two subunits each of ACCase subunit alpha (AccA) and ACCase subunit beta (AccD).

The protein localises to the cytoplasm. The enzyme catalyses N(6)-carboxybiotinyl-L-lysyl-[protein] + acetyl-CoA = N(6)-biotinyl-L-lysyl-[protein] + malonyl-CoA. The protein operates within lipid metabolism; malonyl-CoA biosynthesis; malonyl-CoA from acetyl-CoA: step 1/1. Component of the acetyl coenzyme A carboxylase (ACC) complex. First, biotin carboxylase catalyzes the carboxylation of biotin on its carrier protein (BCCP) and then the CO(2) group is transferred by the carboxyltransferase to acetyl-CoA to form malonyl-CoA. In Staphylococcus haemolyticus (strain JCSC1435), this protein is Acetyl-coenzyme A carboxylase carboxyl transferase subunit alpha.